Consider the following 179-residue polypeptide: Large ribosomal subunit protein uL5 (179 aa).

It belongs to the universal ribosomal protein uL5 family. In terms of assembly, part of the 50S ribosomal subunit; part of the 5S rRNA/L5/L18/L25 subcomplex. Contacts the 5S rRNA and the P site tRNA. Forms a bridge to the 30S subunit in the 70S ribosome.

Its function is as follows. This is one of the proteins that bind and probably mediate the attachment of the 5S RNA into the large ribosomal subunit, where it forms part of the central protuberance. In the 70S ribosome it contacts protein S13 of the 30S subunit (bridge B1b), connecting the 2 subunits; this bridge is implicated in subunit movement. Contacts the P site tRNA; the 5S rRNA and some of its associated proteins might help stabilize positioning of ribosome-bound tRNAs. The protein is Large ribosomal subunit protein uL5 of Tolumonas auensis (strain DSM 9187 / NBRC 110442 / TA 4).